We begin with the raw amino-acid sequence, 115 residues long: NADH-ubiquinone oxidoreductase chain 3 (115 aa).

The next 3 membrane-spanning stretches (helical) occupy residues 3 to 23, 55 to 75, and 86 to 106; these read LVMA…IAFW, FFLV…LLPL, and TMLI…AYEW.

It belongs to the complex I subunit 3 family. As to quaternary structure, core subunit of respiratory chain NADH dehydrogenase (Complex I) which is composed of 45 different subunits. Interacts with TMEM186. Interacts with TMEM242.

It is found in the mitochondrion inner membrane. The catalysed reaction is a ubiquinone + NADH + 5 H(+)(in) = a ubiquinol + NAD(+) + 4 H(+)(out). In terms of biological role, core subunit of the mitochondrial membrane respiratory chain NADH dehydrogenase (Complex I) which catalyzes electron transfer from NADH through the respiratory chain, using ubiquinone as an electron acceptor. Essential for the catalytic activity of complex I. The sequence is that of NADH-ubiquinone oxidoreductase chain 3 from Hippopotamus amphibius (Hippopotamus).